The chain runs to 297 residues: Transmembrane protein 169 (297 aa).

The disordered stretch occupies residues Met1 to Ile84. Over Met1–His159 the chain is Extracellular. Over residues Gly9–His18 the composition is skewed to polar residues. The span at Glu60 to Ile84 shows a compositional bias: acidic residues. Residues Val160–Phe180 form a helical membrane-spanning segment. At Tyr181–Leu210 the chain is on the cytoplasmic side. A helical transmembrane segment spans residues Ile211–Val231. Residues Val232–Val297 lie on the Extracellular side of the membrane.

The protein resides in the membrane. The chain is Transmembrane protein 169 (TMEM169) from Bos taurus (Bovine).